Consider the following 256-residue polypeptide: MGKNLRDLLLAFKNGDISLDEIEKQIKLNYYEEIEERLKLDINRQFRTGVPEVVYGKGKDIDEIIKATLKLVEKNGIALATKIEDIEKLSDEIRKWNLKNYDIKINKKAKTLIIKNKNYEVKKIGKVGILTAGTSDIPVAEEAKDTLEIMGVEAITAYDVGIAGIHRLFPALKRMIEEDVCCIIVVAGMEGALPSVIASMVDIPVIGVPTSTSYGIKITPLLTMLHSCSPGIAVVNIDNGFGAGVFAGLIAKIMHK.

Transmembrane regions (helical) follow at residues C181 to V201 and G231 to A251.

It localises to the cell membrane. This is an uncharacterized protein from Methanocaldococcus jannaschii (strain ATCC 43067 / DSM 2661 / JAL-1 / JCM 10045 / NBRC 100440) (Methanococcus jannaschii).